Consider the following 1198-residue polypeptide: DNA repair protein RAD5 (1198 aa).

Disordered stretches follow at residues 1–129 and 348–401; these read MSAE…PSAP and QGVL…EKLD. The segment covering 45–58 has biased composition (low complexity); sequence STSSKFSINIASSS. Positions 104-117 are enriched in basic residues; it reads PRRKRSLQQAHSHH. Positions 118 to 129 are enriched in low complexity; that stretch reads SSSSSSPVPSAP. The segment covering 386 to 395 has biased composition (acidic residues); that stretch reads VDDDGEDSGD. Residues 509-737 enclose the Helicase ATP-binding domain; the sequence is PTSQNLSRGG…YSLLHFLRIT (229 aa). 522–529 serves as a coordination point for ATP; it reads DAMGMGKT. Residues 541-564 form a disordered region; sequence EEKPAGNLESQTRDGVEGEIDEEP. Positions 688 to 691 match the DEAH box motif; sequence DEAH. An RING-type zinc finger spans residues 920–964; sequence CELCSNEMFDEVLLPCYHRSCQDCIVEWIGTCEDQNKIASCPSCG. The 160-residue stretch at 1021–1180 folds into the Helicase C-terminal domain; the sequence is ALLRQLEEIR…GAKTKETTLA (160 aa).

Belongs to the SNF2/RAD54 helicase family.

The protein localises to the cytoplasm. It is found in the nucleus. Functionally, probable helicase, member of the UBC2/RAD6 epistasis group. Functions with DNA repair protein RAD18 in error-free postreplication DNA repair. Involved in the maintenance of wild-type rates of instability of simple repetitive sequences such as poly(GT) repeats. Seems to be involved in maintaining a balance which acts in favor of error-prone non-homologous joining during DNA double-strand breaks repairs. The chain is DNA repair protein RAD5 (RAD5) from Cryptococcus neoformans var. neoformans serotype D (strain JEC21 / ATCC MYA-565) (Filobasidiella neoformans).